The chain runs to 95 residues: Small ribosomal subunit protein uS19 (95 aa).

A disordered region spans residues 76–95; sequence PTRRFGGHADKKAKKGELKK. Positions 82–95 are enriched in basic and acidic residues; the sequence is GHADKKAKKGELKK.

This sequence belongs to the universal ribosomal protein uS19 family.

Functionally, protein S19 forms a complex with S13 that binds strongly to the 16S ribosomal RNA. The polypeptide is Small ribosomal subunit protein uS19 (rpsS) (Thermotoga maritima (strain ATCC 43589 / DSM 3109 / JCM 10099 / NBRC 100826 / MSB8)).